Reading from the N-terminus, the 326-residue chain is Deoxyuridine 5'-triphosphate nucleotidohydrolase (326 aa).

Substrate contacts are provided by residues 218 to 220 (RSS) and 321 to 322 (FG).

This sequence belongs to the dUTPase family. The cofactor is Mg(2+).

The catalysed reaction is dUTP + H2O = dUMP + diphosphate + H(+). Functionally, involved in nucleotide metabolism: produces dUMP, the immediate precursor of thymidine nucleotides and decreases the intracellular concentration of dUTP to avoid uracil incorporation into viral DNA. In Equus caballus (Horse), this protein is Deoxyuridine 5'-triphosphate nucleotidohydrolase.